Reading from the N-terminus, the 186-residue chain is NADH-quinone oxidoreductase subunit B (186 aa).

Positions 44, 45, 110, and 139 each coordinate [4Fe-4S] cluster.

This sequence belongs to the complex I 20 kDa subunit family. As to quaternary structure, NDH-1 is composed of 14 different subunits. Subunits NuoB, C, D, E, F, and G constitute the peripheral sector of the complex. Requires [4Fe-4S] cluster as cofactor.

The protein resides in the cell inner membrane. It catalyses the reaction a quinone + NADH + 5 H(+)(in) = a quinol + NAD(+) + 4 H(+)(out). In terms of biological role, NDH-1 shuttles electrons from NADH, via FMN and iron-sulfur (Fe-S) centers, to quinones in the respiratory chain. The immediate electron acceptor for the enzyme in this species is believed to be ubiquinone. Couples the redox reaction to proton translocation (for every two electrons transferred, four hydrogen ions are translocated across the cytoplasmic membrane), and thus conserves the redox energy in a proton gradient. The sequence is that of NADH-quinone oxidoreductase subunit B from Leptospira biflexa serovar Patoc (strain Patoc 1 / Ames).